A 118-amino-acid polypeptide reads, in one-letter code: UPF0212 protein HQ_2663A (118 aa).

Belongs to the UPF0212 family.

The chain is UPF0212 protein HQ_2663A from Haloquadratum walsbyi (strain DSM 16790 / HBSQ001).